A 179-amino-acid chain; its full sequence is Protein HEADING DATE 3A (179 aa).

Belongs to the phosphatidylethanolamine-binding protein family. In terms of tissue distribution, expressed in the inner region of the SAM, stem and leaf blade vascular tissues (at protein level).

Its subcellular location is the cytoplasm. The protein resides in the nucleus. Functionally, probable mobile flower-promoting signal (florigen) that moves from the leaf to the shoot apical meristem (SAM) and induces flowering. Promotes the transition from vegetative growth to flowering downstream of HD1 and EHD1 under short day (SD) conditions. Acts upstream of MADS14 and MADS15. This Oryza sativa subsp. japonica (Rice) protein is Protein HEADING DATE 3A (HD3A).